Here is a 108-residue protein sequence, read N- to C-terminus: Large ribosomal subunit protein P2A (108 aa).

The segment at Leu62 to Asp108 is disordered. Over residues Gly68–Glu84 the composition is skewed to low complexity. Positions Ala85–Met102 are enriched in acidic residues. Residue Ser98 is modified to Phosphoserine.

The protein belongs to the eukaryotic ribosomal protein P1/P2 family.

Plays an important role in the elongation step of protein synthesis. This Candida albicans (Yeast) protein is Large ribosomal subunit protein P2A (RPP2A).